The primary structure comprises 694 residues: Elongation factor G (694 aa).

The 280-residue stretch at 8–287 (EDYRNFGIMA…AVVEFLPAPT (280 aa)) folds into the tr-type G domain. Residues 17 to 24 (AHIDAGKT), 86 to 90 (DTPGH), and 140 to 143 (NKMD) contribute to the GTP site.

Belongs to the TRAFAC class translation factor GTPase superfamily. Classic translation factor GTPase family. EF-G/EF-2 subfamily.

It localises to the cytoplasm. Functionally, catalyzes the GTP-dependent ribosomal translocation step during translation elongation. During this step, the ribosome changes from the pre-translocational (PRE) to the post-translocational (POST) state as the newly formed A-site-bound peptidyl-tRNA and P-site-bound deacylated tRNA move to the P and E sites, respectively. Catalyzes the coordinated movement of the two tRNA molecules, the mRNA and conformational changes in the ribosome. This Brucella abortus (strain S19) protein is Elongation factor G.